The primary structure comprises 78 residues: Small venom protein 2 (78 aa).

The signal sequence occupies residues 1-19 (MKFIVLLGALLALLVAVSA). A propeptide spanning residues 20–42 (DRIAREAPEMESVDEAVLTRQAR) is cleaved from the precursor.

Expressed by the venom gland.

Its subcellular location is the secreted. The protein is Small venom protein 2 of Pimpla hypochondriaca (Parasitoid wasp).